We begin with the raw amino-acid sequence, 66 residues long: Large ribosomal subunit protein bL33c (66 aa).

It belongs to the bacterial ribosomal protein bL33 family.

It localises to the plastid. The protein localises to the chloroplast. The chain is Large ribosomal subunit protein bL33c from Brachypodium distachyon (Purple false brome).